Reading from the N-terminus, the 327-residue chain is Fructose-1,6-bisphosphatase class 1 (327 aa).

Mg(2+)-binding residues include Glu84, Asp103, Leu105, and Asp106. Substrate contacts are provided by residues 106 to 109, Asn197, and Lys263; that span reads DGSS. Glu269 is a Mg(2+) binding site.

Belongs to the FBPase class 1 family. In terms of assembly, homotetramer. Mg(2+) is required as a cofactor.

It is found in the cytoplasm. It catalyses the reaction beta-D-fructose 1,6-bisphosphate + H2O = beta-D-fructose 6-phosphate + phosphate. The protein operates within carbohydrate biosynthesis; gluconeogenesis. This Idiomarina loihiensis (strain ATCC BAA-735 / DSM 15497 / L2-TR) protein is Fructose-1,6-bisphosphatase class 1.